The primary structure comprises 831 residues: uncharacterized protein (831 aa).

A disordered region spans residues 285-311; that stretch reads ALNLKRQQLKEEQKEQQSTGDRSDVST. Residue 470 to 477 participates in ATP binding; that stretch reads GDTGNGKS.

This is an uncharacterized protein from Bacillus subtilis (strain 168).